Consider the following 348-residue polypeptide: GMP reductase (348 aa).

108–131 provides a ligand contact to NADP(+); sequence ADFIKLRQILALSPSLKFICIDVA. Gly181 and Gly183 together coordinate K(+). Cys186 acts as the Thioimidate intermediate in catalysis. Residue 216–239 participates in NADP(+) binding; sequence IVSDGGCTMPGDVAKAFGGGADFV.

The protein belongs to the IMPDH/GMPR family. GuaC type 1 subfamily. In terms of assembly, homotetramer.

The enzyme catalyses IMP + NH4(+) + NADP(+) = GMP + NADPH + 2 H(+). Its function is as follows. Catalyzes the irreversible NADPH-dependent deamination of GMP to IMP. It functions in the conversion of nucleobase, nucleoside and nucleotide derivatives of G to A nucleotides, and in maintaining the intracellular balance of A and G nucleotides. The sequence is that of GMP reductase from Edwardsiella ictaluri (strain 93-146).